The primary structure comprises 284 residues: 2-dehydro-3-deoxyphosphooctonate aldolase (284 aa).

Belongs to the KdsA family.

Its subcellular location is the cytoplasm. It catalyses the reaction D-arabinose 5-phosphate + phosphoenolpyruvate + H2O = 3-deoxy-alpha-D-manno-2-octulosonate-8-phosphate + phosphate. It participates in carbohydrate biosynthesis; 3-deoxy-D-manno-octulosonate biosynthesis; 3-deoxy-D-manno-octulosonate from D-ribulose 5-phosphate: step 2/3. The protein operates within bacterial outer membrane biogenesis; lipopolysaccharide biosynthesis. In Mannheimia succiniciproducens (strain KCTC 0769BP / MBEL55E), this protein is 2-dehydro-3-deoxyphosphooctonate aldolase.